A 185-amino-acid polypeptide reads, in one-letter code: Elongation factor P (185 aa).

It belongs to the elongation factor P family.

It localises to the cytoplasm. It functions in the pathway protein biosynthesis; polypeptide chain elongation. Involved in peptide bond synthesis. Stimulates efficient translation and peptide-bond synthesis on native or reconstituted 70S ribosomes in vitro. Probably functions indirectly by altering the affinity of the ribosome for aminoacyl-tRNA, thus increasing their reactivity as acceptors for peptidyl transferase. The polypeptide is Elongation factor P (Trichormus variabilis (strain ATCC 29413 / PCC 7937) (Anabaena variabilis)).